The following is a 98-amino-acid chain: NADH-ubiquinone oxidoreductase chain 4L (98 aa).

3 consecutive transmembrane segments (helical) span residues 1–21, 29–49, and 61–81; these read MSLTYMNMFLAFTISLVGLLM, ALLCLEGMMLSLFVMMTITIL, and IILLVFAACEAALGLSLLVMV.

This sequence belongs to the complex I subunit 4L family. As to quaternary structure, core subunit of respiratory chain NADH dehydrogenase (Complex I) which is composed of 45 different subunits.

The protein resides in the mitochondrion inner membrane. It catalyses the reaction a ubiquinone + NADH + 5 H(+)(in) = a ubiquinol + NAD(+) + 4 H(+)(out). Core subunit of the mitochondrial membrane respiratory chain NADH dehydrogenase (Complex I) which catalyzes electron transfer from NADH through the respiratory chain, using ubiquinone as an electron acceptor. Part of the enzyme membrane arm which is embedded in the lipid bilayer and involved in proton translocation. This Rhinophylla pumilio (Dwarf little fruit bat) protein is NADH-ubiquinone oxidoreductase chain 4L (MT-ND4L).